The sequence spans 258 residues: Small ribosomal subunit protein mS40 (258 aa).

Residues 1 to 35 constitute a mitochondrion transit peptide; sequence MAASVLNVLLRRLPYFSPFRGAYGVQVPLQTLCTK. Ser-49 is subject to Phosphoserine. Positions 221–258 are disordered; that stretch reads QGHLREESGPPPESMPKVPLTAPNEATSTEQAGPQSAL. A compositionally biased stretch (polar residues) spans 244–258; that stretch reads NEATSTEQAGPQSAL.

It belongs to the bacterial ribosomal protein bS18 family. Mitochondrion-specific ribosomal protein mS40 subfamily. Component of the mitochondrial ribosome small subunit (28S) which comprises a 12S rRNA and about 30 distinct proteins.

It is found in the mitochondrion. This Bos taurus (Bovine) protein is Small ribosomal subunit protein mS40.